The primary structure comprises 352 residues: Ion-translocating oxidoreductase complex subunit D (352 aa).

5 helical membrane passes run 20–40 (IMLL…WFFG), 42–62 (GTLV…ALVL), 78–109 (ALLT…VIIA), 123–143 (PAMI…TSWL), and 148–168 (IAVN…GHTA). Residue threonine 187 is modified to FMN phosphoryl threonine. Helical transmembrane passes span 214–234 (ILAG…GVWL), 242–262 (WHIP…GWLF), 267–287 (LAAP…FFIL), 301–321 (LIFG…GGYP), and 322–342 (DGVA…DYYT).

It belongs to the NqrB/RnfD family. In terms of assembly, the complex is composed of six subunits: RsxA, RsxB, RsxC, RsxD, RsxE and RsxG. Requires FMN as cofactor.

The protein resides in the cell inner membrane. In terms of biological role, part of a membrane-bound complex that couples electron transfer with translocation of ions across the membrane. Required to maintain the reduced state of SoxR. The chain is Ion-translocating oxidoreductase complex subunit D from Escherichia coli O139:H28 (strain E24377A / ETEC).